Consider the following 383-residue polypeptide: uncharacterized protein (383 aa).

Belongs to the peptidase M20 family.

This is an uncharacterized protein from Staphylococcus aureus (strain USA300).